The following is a 234-amino-acid chain: Serum amyloid P-component (234 aa).

Residues 1–22 form the signal peptide; the sequence is MDKLLSLLGVSILAGLLLEAFA. A Pentraxin (PTX) domain is found at 27-226; it reads TGKVFVFPRQ…YAVIRPRCVA (200 aa). A glycan (N-linked (GlcNAc...) asparagine) is linked at N54. Residues C58 and C117 are joined by a disulfide bond. Ca(2+) contacts are provided by N81, E158, Q159, D160, and Q170.

It belongs to the pentraxin family. Homopentamer. Pentraxin (or pentaxin) have a discoid arrangement of 5 non-covalently bound subunits. It depends on Ca(2+) as a cofactor.

Its subcellular location is the secreted. This Mesocricetus auratus (Golden hamster) protein is Serum amyloid P-component (APCS).